We begin with the raw amino-acid sequence, 101 residues long: UPF0235 protein MMP1055 (101 aa).

The protein belongs to the UPF0235 family.

This chain is UPF0235 protein MMP1055, found in Methanococcus maripaludis (strain DSM 14266 / JCM 13030 / NBRC 101832 / S2 / LL).